Consider the following 186-residue polypeptide: uncharacterized protein (186 aa).

This is an uncharacterized protein from Saccharomyces cerevisiae (strain ATCC 204508 / S288c) (Baker's yeast).